Consider the following 347-residue polypeptide: Protein RecA (347 aa).

66 to 73 (GPESSGKT) provides a ligand contact to ATP. Residues 328-347 (MPKPNAPKATDEALDETGTD) form a disordered region.

Belongs to the RecA family.

It localises to the cytoplasm. In terms of biological role, can catalyze the hydrolysis of ATP in the presence of single-stranded DNA, the ATP-dependent uptake of single-stranded DNA by duplex DNA, and the ATP-dependent hybridization of homologous single-stranded DNAs. It interacts with LexA causing its activation and leading to its autocatalytic cleavage. The protein is Protein RecA of Hydrogenovibrio crunogenus (strain DSM 25203 / XCL-2) (Thiomicrospira crunogena).